A 343-amino-acid polypeptide reads, in one-letter code: L-threonine 3-dehydrogenase (343 aa).

Residue Cys-38 participates in Zn(2+) binding. Catalysis depends on charge relay system residues Thr-40 and His-43. His-63, Glu-64, Cys-93, Cys-96, Cys-99, and Cys-107 together coordinate Zn(2+). NAD(+)-binding positions include Ile-175, Asp-195, Arg-200, 262 to 264 (LGI), and 286 to 287 (IY).

It belongs to the zinc-containing alcohol dehydrogenase family. Homotetramer. Zn(2+) serves as cofactor.

The protein localises to the cytoplasm. It catalyses the reaction L-threonine + NAD(+) = (2S)-2-amino-3-oxobutanoate + NADH + H(+). The protein operates within amino-acid degradation; L-threonine degradation via oxydo-reductase pathway; glycine from L-threonine: step 1/2. In terms of biological role, catalyzes the NAD(+)-dependent oxidation of L-threonine to 2-amino-3-ketobutyrate. The polypeptide is L-threonine 3-dehydrogenase (Burkholderia mallei (strain NCTC 10247)).